A 93-amino-acid polypeptide reads, in one-letter code: Large ribosomal subunit protein uL23 (93 aa).

The protein belongs to the universal ribosomal protein uL23 family. Part of the 50S ribosomal subunit. Contacts protein L29, and trigger factor when it is bound to the ribosome.

Functionally, one of the early assembly proteins it binds 23S rRNA. One of the proteins that surrounds the polypeptide exit tunnel on the outside of the ribosome. Forms the main docking site for trigger factor binding to the ribosome. The chain is Large ribosomal subunit protein uL23 from Nautilia profundicola (strain ATCC BAA-1463 / DSM 18972 / AmH).